An 862-amino-acid chain; its full sequence is MARAINSAYRSFINSSATDDRRTRMNAPRSLSALSTTANPALSTLVEQVCALIAPNWPLDRMIAVSPYWKRIDKPFAQAAAELKQLAASPMTMTLSDYHLRWQNKQIQSADLQQAIAEQNSDLSESTLIAALQQPTAPSHPWPLLCDTVDSRRDLEHHPAWNDAITHQISQFCAAYFDHHQADWSPDQQTGLFATWREAMIHDRSITLLLNETSVKQKATKLPEDAMAAIEQTLAQLAIAPAQQETYLQAVLMRISGWASWCAYLAWQAGFEGRHDEHLRDLLAIRLCWENLLDDGERGMGSVWLQWQQSWAPRQSCEEDRALRIALLWQRSAEIAYQRQLFAALTSAQESAPQSSYPEVQAAFCIDVRSEVIRRHLEAQSPHIQTLGFAGFFGLPIRYQLLGTEASRPQLPGLLAPSLIVSDSTGNEDQDAKLALRRRARLKRHFSWRAFHHLPASTFTLVETTGLAYLTKLLKRTLSYPALSASVERFAFTEHEWQSVKPQFTRDPQTLAQRAQMAANILRALGIATEQARLVLLVGHGSQTQNNPQRAGLDCGACCGQSGEVNARTLAALLNDQAVRQALPEYGISLRDDVHFIAALHNTTTEAMRLFDRHEIPTSHREALEQLDQQLTAASHGARQERAPSLELNHNHQAPPSKDNALSAQQLEQAFLRRAHDWAQTRPEWGLTNNAAFIIAPRQRSKQAKLDGRVFLHEYQPERDPEGQLLTQIMTAPMLVTHWINMQYFASTVDNRRFGSGNKTLHNVVGGNIGLFEGNGGDLRCGLALQSLHDGQGWRHEALRLTVVIDAPRERIEQVMASHRVVEHLVKHEWLYLARFADQGIEIYLQGTWQRITQPSSDSSAR.

Residues C365, D367, H540, and C555 each contribute to the Zn(2+) site.

This sequence belongs to the inorganic carbon transporter (TC 9.A.2) DabA family. Forms a complex with DabB. Requires Zn(2+) as cofactor.

It is found in the cell inner membrane. Its function is as follows. Part of an energy-coupled inorganic carbon pump. The sequence is that of Probable inorganic carbon transporter subunit DabA from Vibrio cholerae serotype O1 (strain ATCC 39315 / El Tor Inaba N16961).